We begin with the raw amino-acid sequence, 235 residues long: Vacuolar protein sorting-associated protein 60.2 (235 aa).

The interval 1-30 is disordered; it reads MKRIFGAKNNKEPPPSIQDASDRINKRGDS. Positions 20–30 are enriched in basic and acidic residues; it reads ASDRINKRGDS. The stretch at 99 to 148 forms a coiled coil; the sequence is LKDAQQTMTALKSANKELKGMMKTVKIQDIDNLQDDMMDLMDESSEIQET. Residues 174-235 form a disordered region; it reads DMGNETEADG…PAVPRASLRG (62 aa).

The protein belongs to the SNF7 family.

Its subcellular location is the endosome. It is found in the multivesicular body membrane. In terms of biological role, probable peripherally associated component of the endosomal sorting required for transport complex III (ESCRT-III) which is involved in multivesicular bodies (MVBs) formation and sorting of endosomal cargo proteins into MVBs. This chain is Vacuolar protein sorting-associated protein 60.2, found in Arabidopsis thaliana (Mouse-ear cress).